A 152-amino-acid polypeptide reads, in one-letter code: METPKLSVEAIEKGTVIDHIPAGRGLTILRQFKLLHYGNAVTVGFNLPSKTQGSKDIIKIKGVCLDDKAADRLALFAPEAVVNTIDNFKVVQKRHLNLPDEIAEVFRCPNTNCAGHGEPVKSRFYVKKHNGQTRLKCHYCEKTYSRDSVAEA.

Zn(2+) is bound by residues Cys108, Cys113, Cys137, and Cys140.

This sequence belongs to the PyrI family. Contains catalytic and regulatory chains. Zn(2+) serves as cofactor.

Functionally, involved in allosteric regulation of aspartate carbamoyltransferase. The chain is Aspartate carbamoyltransferase regulatory chain from Neisseria meningitidis serogroup B (strain ATCC BAA-335 / MC58).